The chain runs to 347 residues: NADH-quinone oxidoreductase subunit H (347 aa).

9 consecutive transmembrane segments (helical) span residues 13–33, 50–70, 82–102, 115–135, 161–181, 198–218, 263–283, 286–306, and 321–341; these read IIMI…IAYV, PNVV…KFVF, AVFL…WAVV, VGIL…IMGG, IGFV…TDIV, FLDW…ISAL, CSLT…IWIL, VPGI…FAMV, and LGWK…AFVL.

It belongs to the complex I subunit 1 family. NDH-1 is composed of 14 different subunits. Subunits NuoA, H, J, K, L, M, N constitute the membrane sector of the complex.

The protein localises to the cell inner membrane. It carries out the reaction a quinone + NADH + 5 H(+)(in) = a quinol + NAD(+) + 4 H(+)(out). In terms of biological role, NDH-1 shuttles electrons from NADH, via FMN and iron-sulfur (Fe-S) centers, to quinones in the respiratory chain. The immediate electron acceptor for the enzyme in this species is believed to be ubiquinone. Couples the redox reaction to proton translocation (for every two electrons transferred, four hydrogen ions are translocated across the cytoplasmic membrane), and thus conserves the redox energy in a proton gradient. This subunit may bind ubiquinone. The protein is NADH-quinone oxidoreductase subunit H of Rhizobium leguminosarum bv. trifolii (strain WSM2304).